The chain runs to 219 residues: Ion-translocating oxidoreductase complex subunit G (219 aa).

The chain crosses the membrane as a helical span at residues 25–45 (GLLLGLFSLVSALMLALASDA). Residue Thr187 is modified to FMN phosphoryl threonine.

It belongs to the RnfG family. The complex is composed of six subunits: RnfA, RnfB, RnfC, RnfD, RnfE and RnfG. FMN serves as cofactor.

Its subcellular location is the cellular chromatophore membrane. In terms of biological role, part of a membrane-bound complex that couples electron transfer with translocation of ions across the membrane. This is Ion-translocating oxidoreductase complex subunit G from Cereibacter sphaeroides (strain ATCC 17029 / ATH 2.4.9) (Rhodobacter sphaeroides).